The primary structure comprises 122 residues: uncharacterized protein (122 aa).

The signal sequence occupies residues 1 to 35 (MCCYVGKATKIFLCLAAALIVVGLVLGFGLAHRTW). The disordered stretch occupies residues 55–83 (YGGGGGGGDPLPATSGAGDTPPGVPLTEP).

This is an uncharacterized protein from Oryza sativa subsp. japonica (Rice).